The primary structure comprises 251 residues: Mlc titration factor A (251 aa).

Residues His-111, His-148, His-152, and Glu-211 each coordinate Zn(2+).

It belongs to the MtfA family. Interacts with Mlc. Zn(2+) is required as a cofactor.

The protein localises to the cytoplasm. Functionally, involved in the modulation of the activity of the glucose-phosphotransferase system (glucose-PTS). Interacts with the transcriptional repressor Mlc, preventing its interaction with DNA and leading to the modulation of expression of genes regulated by Mlc, including ptsG, which encodes the PTS system glucose-specific EIICB component. Shows zinc-dependent metallopeptidase activity. This is Mlc titration factor A from Salmonella arizonae (strain ATCC BAA-731 / CDC346-86 / RSK2980).